Here is a 187-residue protein sequence, read N- to C-terminus: uncharacterized protein (187 aa).

The disordered stretch occupies residues 1 to 95 (MTTMKRSADP…GSTRPSARYG (95 aa)). The span at 46 to 80 (RARRSRGPKRFLGKRNYRRARARKPGKRDRAHSSK) shows a compositional bias: basic residues.

It localises to the mitochondrion. This is an uncharacterized protein from Arabidopsis thaliana (Mouse-ear cress).